The sequence spans 1244 residues: ATP-dependent RNA helicase DHX8 (1244 aa).

K140 participates in a covalent cross-link: Glycyl lysine isopeptide (Lys-Gly) (interchain with G-Cter in SUMO2). Disordered regions lie at residues 152 to 289 (LMPS…PAIG) and 361 to 396 (DVDQETGEDLNPNRRRNLVGETNEETSMRNPDRPTH). Residues 160 to 169 (EKQRDPEHRD) show a composition bias toward basic and acidic residues. A compositionally biased stretch (basic residues) spans 170–179 (RTKKKKRSRS). Residues 180 to 220 (RDRDRDRDRDRDRDRDRDRDRDKDRERDRDRERDRERDRER) are compositionally biased toward basic and acidic residues. A compositionally biased stretch (basic residues) spans 221–234 (DHKRRHRSRSRSHS). Residues 256–283 (FKDRKDREKYGERNLDRWRDKHVDRPPP) are compositionally biased toward basic and acidic residues. One can recognise an S1 motif domain in the interval 289 to 360 (GDIYNGKVTS…TGTKTSLSMK (72 aa)). Basic and acidic residues predominate over residues 386–395 (TSMRNPDRPT). S419 carries the post-translational modification Phosphoserine. K423 is covalently cross-linked (Glycyl lysine isopeptide (Lys-Gly) (interchain with G-Cter in SUMO2)). S484 is subject to Phosphoserine. Positions 599–762 (VQAVHDNQIL…FYEAPIFTIP (164 aa)) constitute a Helicase ATP-binding domain. Position 612–619 (612–619 (GETGSGKT)) interacts with ATP. The DEAH box motif lies at 709 to 712 (DEAH). In terms of domain architecture, Helicase C-terminal spans 780 to 960 (YLDASLITVM…STVLSLKAMG (181 aa)).

This sequence belongs to the DEAD box helicase family. DEAH subfamily. DDX8/PRP22 sub-subfamily. As to quaternary structure, identified in the spliceosome C complex. Interacts with ARRB2; the interaction is detected in the nucleus upon OR1D2 stimulation. Interacts with SRRM2. Interacts with CACTIN.

The protein resides in the nucleus. It catalyses the reaction ATP + H2O = ADP + phosphate + H(+). Functionally, involved in pre-mRNA splicing as component of the spliceosome. Facilitates nuclear export of spliced mRNA by releasing the RNA from the spliceosome. The sequence is that of ATP-dependent RNA helicase DHX8 (Dhx8) from Mus musculus (Mouse).